A 603-amino-acid polypeptide reads, in one-letter code: Elongation factor 4 (603 aa).

The 183-residue stretch at 7 to 189 (VRIRNFCIIA…AVVERVPPPP (183 aa)) folds into the tr-type G domain. GTP contacts are provided by residues 19–24 (DHGKST) and 136–139 (NKID).

The protein belongs to the TRAFAC class translation factor GTPase superfamily. Classic translation factor GTPase family. LepA subfamily.

It localises to the cell inner membrane. It carries out the reaction GTP + H2O = GDP + phosphate + H(+). Required for accurate and efficient protein synthesis under certain stress conditions. May act as a fidelity factor of the translation reaction, by catalyzing a one-codon backward translocation of tRNAs on improperly translocated ribosomes. Back-translocation proceeds from a post-translocation (POST) complex to a pre-translocation (PRE) complex, thus giving elongation factor G a second chance to translocate the tRNAs correctly. Binds to ribosomes in a GTP-dependent manner. The protein is Elongation factor 4 of Nostoc sp. (strain PCC 7120 / SAG 25.82 / UTEX 2576).